The sequence spans 115 residues: DNA-binding protein Ta0052 (115 aa).

Residues 1-41 are disordered; the sequence is MDDDEELERIRRQQLESMQRQAMQEQMREEQEKQREAERAR. Over residues 15–25 the composition is skewed to low complexity; sequence LESMQRQAMQE. Positions 26–41 are enriched in basic and acidic residues; sequence QMREEQEKQREAERAR.

Belongs to the PDCD5 family.

This is DNA-binding protein Ta0052 from Thermoplasma acidophilum (strain ATCC 25905 / DSM 1728 / JCM 9062 / NBRC 15155 / AMRC-C165).